The primary structure comprises 212 residues: Thymidylate kinase (212 aa).

Residue 11 to 18 (GIEGSGKT) participates in ATP binding.

This sequence belongs to the thymidylate kinase family.

It carries out the reaction dTMP + ATP = dTDP + ADP. Its function is as follows. Phosphorylation of dTMP to form dTDP in both de novo and salvage pathways of dTTP synthesis. This is Thymidylate kinase from Buchnera aphidicola subsp. Baizongia pistaciae (strain Bp).